Reading from the N-terminus, the 327-residue chain is Pyruvate dehydrogenase E1 component subunit beta (327 aa).

Glutamate 63 is a binding site for thiamine diphosphate.

Heterodimer of an alpha and a beta chain. Thiamine diphosphate is required as a cofactor.

The catalysed reaction is N(6)-[(R)-lipoyl]-L-lysyl-[protein] + pyruvate + H(+) = N(6)-[(R)-S(8)-acetyldihydrolipoyl]-L-lysyl-[protein] + CO2. In terms of biological role, the pyruvate dehydrogenase complex catalyzes the overall conversion of pyruvate to acetyl-CoA and CO(2). It contains multiple copies of three enzymatic components: pyruvate dehydrogenase (E1), dihydrolipoamide acetyltransferase (E2) and lipoamide dehydrogenase (E3). This chain is Pyruvate dehydrogenase E1 component subunit beta (pdhB), found in Mycoplasma pneumoniae (strain ATCC 29342 / M129 / Subtype 1) (Mycoplasmoides pneumoniae).